We begin with the raw amino-acid sequence, 451 residues long: Target of rapamycin complex 1 subunit tco89 (451 aa).

Residues 1–35 (MERPSLSRRTSSSTVSTDGEGVYSRSTKERKRNFI) are disordered. Residues 7 to 17 (SRRTSSSTVST) are compositionally biased toward low complexity. Serine 70 carries the post-translational modification Phosphoserine. 3 disordered regions span residues 122-164 (WDDA…PVTR), 176-264 (INSN…GNSL), and 362-437 (NQNF…DTDY). Polar residues predominate over residues 129-162 (NDSTAGNLDSDSALPTPSVTTNEAADSSRASSPV). The segment covering 203–215 (DDSAADASTTKSS) has biased composition (low complexity). Polar residues-rich tracts occupy residues 228-242 (HSNN…NQPK), 362-376 (NQNF…TSAA), and 407-417 (QSASLNASMSA). The span at 419–430 (SHARQRSIHVPK) shows a compositional bias: basic residues.

Belongs to the TORC subunit TCO89 family. In terms of assembly, the target of rapamycin complex 1 (TORC1) is composed of at least mip1, pop3/wat1, tco89, toc1 and tor2. In terms of processing, either Thr-10, Ser-11, Ser-12, Ser-13 or Thr-14 and Ser-214 or Ser-215 and Ser-247 or Ser-249 are phosphorylated as well.

The protein localises to the cytoplasm. In terms of biological role, component of TORC1, which regulates multiple cellular processes to control cell growth in response to environmental signals. Tor2 is essential for growth. Nutrient limitation and environmental stress signals cause inactivation of TORC1. Active TORC1 positively controls cell growth and ribosome biogenesis by regulating ribosomal protein gene expression. TORC1 negatively controls G1 cell-cycle arrest, sexual development and amino acid uptake. Represses mating, meiosis and sporulation efficiency by interfering with the functions of the transcription factor ste11 and the meiosis-promoting RNA-binding protein mei2. In Schizosaccharomyces pombe (strain 972 / ATCC 24843) (Fission yeast), this protein is Target of rapamycin complex 1 subunit tco89.